A 347-amino-acid chain; its full sequence is UDP-N-acetylenolpyruvoylglucosamine reductase (347 aa).

An FAD-binding PCMH-type domain is found at 23-197; it reads LPARAARLLR…LRVRFRLPQA (175 aa). Arginine 174 is an active-site residue. The active-site Proton donor is the serine 247. Glutamate 343 is an active-site residue.

It belongs to the MurB family. Requires FAD as cofactor.

The protein localises to the cytoplasm. It carries out the reaction UDP-N-acetyl-alpha-D-muramate + NADP(+) = UDP-N-acetyl-3-O-(1-carboxyvinyl)-alpha-D-glucosamine + NADPH + H(+). It participates in cell wall biogenesis; peptidoglycan biosynthesis. Its function is as follows. Cell wall formation. This chain is UDP-N-acetylenolpyruvoylglucosamine reductase, found in Azoarcus sp. (strain BH72).